The following is a 328-amino-acid chain: Phenylalanine--tRNA ligase alpha subunit (328 aa).

E245 serves as a coordination point for Mg(2+).

Belongs to the class-II aminoacyl-tRNA synthetase family. Phe-tRNA synthetase alpha subunit type 1 subfamily. Tetramer of two alpha and two beta subunits. Requires Mg(2+) as cofactor.

Its subcellular location is the cytoplasm. The catalysed reaction is tRNA(Phe) + L-phenylalanine + ATP = L-phenylalanyl-tRNA(Phe) + AMP + diphosphate + H(+). The polypeptide is Phenylalanine--tRNA ligase alpha subunit (Helicobacter pylori (strain G27)).